The following is a 98-amino-acid chain: Alpha-elicitin capsicein (98 aa).

3 disulfides stabilise this stretch: Cys3–Cys71, Cys27–Cys56, and Cys51–Cys95.

This sequence belongs to the elicitin family.

It is found in the secreted. In terms of biological role, induces local and distal defense responses (incompatible hypersensitive reaction) in plants from the solanaceae and cruciferae families. Elicits leaf necrosis and causes the accumulation of pathogenesis-related proteins. Might interact with the lipidic molecules of the plasma membrane. This is Alpha-elicitin capsicein from Phytophthora capsici.